Consider the following 339-residue polypeptide: DNA-directed RNA polymerase subunit alpha (339 aa).

Residues 1-233 (MVREEVAGST…DLFLPFLHAE (233 aa)) are alpha N-terminal domain (alpha-NTD). The interval 264–339 (KKGIPLNCIF…IDLLKNKLSF (76 aa)) is alpha C-terminal domain (alpha-CTD).

This sequence belongs to the RNA polymerase alpha chain family. As to quaternary structure, in plastids the minimal PEP RNA polymerase catalytic core is composed of four subunits: alpha, beta, beta', and beta''. When a (nuclear-encoded) sigma factor is associated with the core the holoenzyme is formed, which can initiate transcription.

Its subcellular location is the plastid. It localises to the chloroplast. It catalyses the reaction RNA(n) + a ribonucleoside 5'-triphosphate = RNA(n+1) + diphosphate. DNA-dependent RNA polymerase catalyzes the transcription of DNA into RNA using the four ribonucleoside triphosphates as substrates. The chain is DNA-directed RNA polymerase subunit alpha from Secale strictum (Mountain rye).